The following is a 154-amino-acid chain: 6,7-dimethyl-8-ribityllumazine synthase (154 aa).

5-amino-6-(D-ribitylamino)uracil contacts are provided by residues Phe22, 56–58 (AFE), and 80–82 (AVI). 85-86 (ST) is a (2S)-2-hydroxy-3-oxobutyl phosphate binding site. His88 serves as the catalytic Proton donor. Phe113 provides a ligand contact to 5-amino-6-(D-ribitylamino)uracil. Arg127 contacts (2S)-2-hydroxy-3-oxobutyl phosphate.

It belongs to the DMRL synthase family.

It catalyses the reaction (2S)-2-hydroxy-3-oxobutyl phosphate + 5-amino-6-(D-ribitylamino)uracil = 6,7-dimethyl-8-(1-D-ribityl)lumazine + phosphate + 2 H2O + H(+). It functions in the pathway cofactor biosynthesis; riboflavin biosynthesis; riboflavin from 2-hydroxy-3-oxobutyl phosphate and 5-amino-6-(D-ribitylamino)uracil: step 1/2. Catalyzes the formation of 6,7-dimethyl-8-ribityllumazine by condensation of 5-amino-6-(D-ribitylamino)uracil with 3,4-dihydroxy-2-butanone 4-phosphate. This is the penultimate step in the biosynthesis of riboflavin. This Clostridium beijerinckii (strain ATCC 51743 / NCIMB 8052) (Clostridium acetobutylicum) protein is 6,7-dimethyl-8-ribityllumazine synthase.